The following is a 352-amino-acid chain: Putative GATA transcription factor 22 (352 aa).

The interval 27 to 53 (SLHHHLQQQQQQQQHFHHQASSNPSSL) is disordered. Residues 33-53 (QQQQQQQQHFHHQASSNPSSL) are compositionally biased toward low complexity. A Nuclear localization signal motif is present at residues 112–119 (PKKETRLK). Positions 163–189 (AIITTSDSSKQHTNNDQSSNLSNSERQ) are disordered. Polar residues predominate over residues 165–189 (ITTSDSSKQHTNNDQSSNLSNSERQ). Residues 195–249 (DCVIRICSDCNTTKTPLWRSGPRGPKSLCNACGIRQRKARRAAMATATATAVSGV) form a GATA-type zinc finger.

The protein belongs to the type IV zinc-finger family. Class B subfamily. Forms heterodimers with GATA18. In terms of tissue distribution, expressed predominantly in leaves, and barely in stems, flowers and siliques.

The protein localises to the nucleus. Functionally, transcriptional regulator that specifically binds 5'-GATA-3' or 5'-GAT-3' motifs within gene promoters. Involved in the modulation of chloroplast development, growth and division in a cytokinin-dependent manner. Repressor of the gibberellic acid (GA) signaling pathway that regulates flowering and modulates greening, in a SOC1-dependent manner. Prevents the accumulation of SOC1 during flowering. Promotes chlorophyll biosynthesis throughout the plant, by regulating chlorophyll biosynthetic genes (e.g. HEMA1 and GUN4) and chloroplast localized glutamate synthase (e.g. GLU1). Involved in the regulation of sugar-sensing genes (e.g. HXK1, HXK2, STP13 and PLT6). Regulator of germination, senescence, elongation growth and flowering time. Influences also leaf starch content. In Arabidopsis thaliana (Mouse-ear cress), this protein is Putative GATA transcription factor 22.